A 145-amino-acid chain; its full sequence is MNKIIGFIRLEIESGKASPSPPVGPALGLRGVNIMQFCKEFNNRCKQLNIKDGVPVPTIITVYDDKTFSFKMKTPSITYFIKKHLEISKGASKPGKENFLNIDIRSLYEIAEIKKIDSNLDIKSICKSLIGSVKSMGIKTIIVKN.

Belongs to the universal ribosomal protein uL11 family.

Its subcellular location is the mitochondrion. In Reclinomonas americana, this protein is Large ribosomal subunit protein uL11m (RPL11).